Consider the following 745-residue polypeptide: Jacalin-related lectin 4 (745 aa).

5 Jacalin-type lectin domains span residues 2–148 (AQKL…YFAP), 151–294 (PTKF…YFSP), 307–448 (AEKL…YFVT), 451–594 (PTKF…YFSR), and 601–744 (AETL…YVMP).

It belongs to the jacalin lectin family.

This Arabidopsis thaliana (Mouse-ear cress) protein is Jacalin-related lectin 4 (JAL4).